A 128-amino-acid polypeptide reads, in one-letter code: uncharacterized protein (128 aa).

Positions 24 to 43 (KRTQNNTEQASRAINSPLQS) are disordered. Over residues 26-43 (TQNNTEQASRAINSPLQS) the composition is skewed to polar residues.

This is an uncharacterized protein from Homo sapiens (Human).